A 27-amino-acid chain; its full sequence is Phospholipase A2 2 (27 aa).

Residues 1–27 (FMKVIDPGTKWCGPGNKAADDTDNGKN) form a disordered region. Ca(2+)-binding residues include W11, G13, and G15. A compositionally biased stretch (basic and acidic residues) spans 18–27 (AADDTDNGKN).

It belongs to the phospholipase A2 family. The cofactor is Ca(2+). As to expression, expressed by the venom gland.

The protein resides in the secreted. It catalyses the reaction a 1,2-diacyl-sn-glycero-3-phosphocholine + H2O = a 1-acyl-sn-glycero-3-phosphocholine + a fatty acid + H(+). Its function is as follows. PLA2 catalyzes the calcium-dependent hydrolysis of the 2-acyl groups in 3-sn-phosphoglycerides. The protein is Phospholipase A2 2 of Opisthacanthus cayaporum (South American scorpion).